The chain runs to 314 residues: Polyamine aminopropyltransferase (314 aa).

The PABS domain occupies 4 to 241; the sequence is GMYFFEHVTP…LNFGFLLASD (238 aa). Residue glutamine 33 coordinates S-methyl-5'-thioadenosine. The spermidine site is built by histidine 64 and glutamate 88. Residues aspartate 108 and 140–141 contribute to the S-methyl-5'-thioadenosine site; that span reads DA. The active-site Proton acceptor is the aspartate 158. Proline 168 serves as a coordination point for S-methyl-5'-thioadenosine.

The protein belongs to the spermidine/spermine synthase family. As to quaternary structure, homodimer or homotetramer.

Its subcellular location is the cytoplasm. It carries out the reaction S-adenosyl 3-(methylsulfanyl)propylamine + putrescine = S-methyl-5'-thioadenosine + spermidine + H(+). It participates in amine and polyamine biosynthesis; spermidine biosynthesis; spermidine from putrescine: step 1/1. Catalyzes the irreversible transfer of a propylamine group from the amino donor S-adenosylmethioninamine (decarboxy-AdoMet) to putrescine (1,4-diaminobutane) to yield spermidine. This chain is Polyamine aminopropyltransferase, found in Thermus thermophilus (strain ATCC BAA-163 / DSM 7039 / HB27).